The sequence spans 370 residues: Proto-oncogene Wnt-1 (370 aa).

The signal sequence occupies residues 1-27 (MGLWALLPGWVSATLLLALAALPAALA). Asparagine 29 carries N-linked (GlcNAc...) asparagine glycosylation. 11 disulfide bridges follow: cysteine 93-cysteine 104, cysteine 143-cysteine 151, cysteine 153-cysteine 170, cysteine 218-cysteine 232, cysteine 220-cysteine 227, cysteine 299-cysteine 330, cysteine 315-cysteine 325, cysteine 329-cysteine 369, cysteine 345-cysteine 360, cysteine 347-cysteine 357, and cysteine 352-cysteine 353. A lipid anchor (O-palmitoleoyl serine; by PORCN) is attached at serine 224. N-linked (GlcNAc...) asparagine glycosylation is found at asparagine 316 and asparagine 346. N-linked (GlcNAc...) asparagine glycosylation occurs at asparagine 359.

This sequence belongs to the Wnt family. As to quaternary structure, forms a soluble 1:1 complex with AFM; this prevents oligomerization and is required for prolonged biological activity. The complex with AFM may represent the physiological form in body fluids. Interacts with PORCN. Interacts with RSPO1, RSPO2 and RSPO3. Interacts with WLS. Post-translationally, palmitoleoylation is required for efficient binding to frizzled receptors. Palmitoleoylation is necessary for proper trafficking to cell surface. Depalmitoleoylated by NOTUM, leading to inhibit Wnt signaling pathway.

The protein resides in the secreted. Its subcellular location is the extracellular space. The protein localises to the extracellular matrix. Ligand for members of the frizzled family of seven transmembrane receptors. Acts in the canonical Wnt signaling pathway by promoting beta-catenin-dependent transcriptional activation. In some developmental processes, is also a ligand for the coreceptor RYK, thus triggering Wnt signaling. Plays an essential role in the development of the embryonic brain and central nervous system (CNS). Has a role in osteoblast function, bone development and bone homeostasis. The sequence is that of Proto-oncogene Wnt-1 (WNT1) from Homo sapiens (Human).